Reading from the N-terminus, the 415-residue chain is Erythronolide mycarosyltransferase (415 aa).

The protein belongs to the glycosyltransferase 28 family.

It catalyses the reaction dTDP-beta-L-mycarose + erythronolide B = 3-O-alpha-L-mycarosylerythronolide B + dTDP + H(+). In terms of biological role, involved in the biosynthesis of the macrolide antibiotic erythromycin. Catalyzes the reversible transfer of mycarosyl from dTDP-beta-L-mycarose to erythronolide B to yield 3-alpha-L-mycarosylerythronolide B. It can also use TDP-beta-L-cladinose. The chain is Erythronolide mycarosyltransferase from Saccharopolyspora erythraea (Streptomyces erythraeus).